A 253-amino-acid chain; its full sequence is Large ribosomal subunit protein uL10m (253 aa).

A mitochondrion-targeting transit peptide spans 1-24; that stretch reads MANLMQRSLPLTTTRTPVLQFLRF.

The protein belongs to the universal ribosomal protein uL10 family. In terms of assembly, component of the mitochondrial ribosome large subunit (39S) which comprises a 16S rRNA and about 50 distinct proteins.

It is found in the mitochondrion. The polypeptide is Large ribosomal subunit protein uL10m (mRpL10) (Drosophila pseudoobscura pseudoobscura (Fruit fly)).